A 219-amino-acid polypeptide reads, in one-letter code: Holliday junction branch migration complex subunit RuvA (219 aa).

Residues 1–66 form a domain I region; the sequence is MIEYIIGKIS…NFLFEYYGFK (66 aa). Positions 67–148 are domain II; it reads TLREKIFFEN…SEYNNDVNHS (82 aa). The tract at residues 149–154 is flexible linker; it reads SINQQS. The interval 155–219 is domain III; it reads NSYNPVPDLV…EAVTNKTTVS (65 aa).

The protein belongs to the RuvA family. In terms of assembly, homotetramer. Forms an RuvA(8)-RuvB(12)-Holliday junction (HJ) complex. HJ DNA is sandwiched between 2 RuvA tetramers; dsDNA enters through RuvA and exits via RuvB. An RuvB hexamer assembles on each DNA strand where it exits the tetramer. Each RuvB hexamer is contacted by two RuvA subunits (via domain III) on 2 adjacent RuvB subunits; this complex drives branch migration. In the full resolvosome a probable DNA-RuvA(4)-RuvB(12)-RuvC(2) complex forms which resolves the HJ.

The protein localises to the cytoplasm. Its function is as follows. The RuvA-RuvB-RuvC complex processes Holliday junction (HJ) DNA during genetic recombination and DNA repair, while the RuvA-RuvB complex plays an important role in the rescue of blocked DNA replication forks via replication fork reversal (RFR). RuvA specifically binds to HJ cruciform DNA, conferring on it an open structure. The RuvB hexamer acts as an ATP-dependent pump, pulling dsDNA into and through the RuvAB complex. HJ branch migration allows RuvC to scan DNA until it finds its consensus sequence, where it cleaves and resolves the cruciform DNA. This Malacoplasma penetrans (strain HF-2) (Mycoplasma penetrans) protein is Holliday junction branch migration complex subunit RuvA.